The chain runs to 146 residues: Extracellular globin-2A (146 aa).

The Globin domain maps to 4–146 (HCGPLQRLKV…EVIYPGIKHD (143 aa)). A disulfide bridge connects residues Cys5 and Cys134. His97 contacts heme b.

This sequence belongs to the globin family. As to quaternary structure, disulfide bonded trimer of chains IIA, IIB, and IIC.

The sequence is that of Extracellular globin-2A from Tylorrhynchus heterochetus (Japanese palolo worm).